Reading from the N-terminus, the 131-residue chain is D-ribose pyranase (131 aa).

Histidine 20 acts as the Proton donor in catalysis. Residues aspartate 28, histidine 98, and 120–122 (FSN) each bind substrate.

This sequence belongs to the RbsD / FucU family. RbsD subfamily. As to quaternary structure, homodecamer.

Its subcellular location is the cytoplasm. The catalysed reaction is beta-D-ribopyranose = beta-D-ribofuranose. The protein operates within carbohydrate metabolism; D-ribose degradation; D-ribose 5-phosphate from beta-D-ribopyranose: step 1/2. Catalyzes the interconversion of beta-pyran and beta-furan forms of D-ribose. The chain is D-ribose pyranase from Petrotoga mobilis (strain DSM 10674 / SJ95).